Here is a 519-residue protein sequence, read N- to C-terminus: 4-nitrophenol 2-monooxygenase, oxygenase component (519 aa).

This sequence belongs to the FADH(2)-utilizing monooxygenase family. In terms of assembly, homotetramer. 4-nitrophenol 2-monooxygenase complex consists of an oxygenase component NphA1 and a flavin reductase component NphA2. FAD serves as cofactor.

It carries out the reaction 4-nitrophenol + NADH + O2 + H(+) = 4-nitrocatechol + NAD(+) + H2O. Its activity is regulated as follows. Partially inhibited by concentrations of FAD above 10 uM and completely inhibited by concentrations above 50 uM. In terms of biological role, utilizes the flavins supplied by NphA2 to catalyze the degradation of 4-nitrophenol (4-NP) via 4-nitrocatechol (4-NC) which is used as the sole carbon, nitrogen, and energy source. Can also degrade phenol and 4-chlorophenol as rapidly as 4-NP. This is 4-nitrophenol 2-monooxygenase, oxygenase component (nphA1) from Rhodococcus sp.